A 401-amino-acid chain; its full sequence is Argininosuccinate synthase (401 aa).

Position 9 to 17 (9 to 17 (AYSGGLDTS)) interacts with ATP. Tyr-86 contributes to the L-citrulline binding site. Gly-116 lines the ATP pocket. The L-aspartate site is built by Thr-118, Asn-122, and Asp-123. Position 122 (Asn-122) interacts with L-citrulline. 5 residues coordinate L-citrulline: Arg-126, Ser-174, Ser-183, Glu-259, and Tyr-271.

This sequence belongs to the argininosuccinate synthase family. Type 1 subfamily. Homotetramer.

The protein localises to the cytoplasm. It catalyses the reaction L-citrulline + L-aspartate + ATP = 2-(N(omega)-L-arginino)succinate + AMP + diphosphate + H(+). Its pathway is amino-acid biosynthesis; L-arginine biosynthesis; L-arginine from L-ornithine and carbamoyl phosphate: step 2/3. This Bacillus cereus (strain AH187) protein is Argininosuccinate synthase.